The sequence spans 377 residues: Ribosomal RNA large subunit methyltransferase G (377 aa).

It belongs to the methyltransferase superfamily. RlmG family.

It localises to the cytoplasm. The enzyme catalyses guanosine(1835) in 23S rRNA + S-adenosyl-L-methionine = N(2)-methylguanosine(1835) in 23S rRNA + S-adenosyl-L-homocysteine + H(+). Functionally, specifically methylates the guanine in position 1835 (m2G1835) of 23S rRNA. The sequence is that of Ribosomal RNA large subunit methyltransferase G from Aeromonas salmonicida (strain A449).